We begin with the raw amino-acid sequence, 361 residues long: Phospho-N-acetylmuramoyl-pentapeptide-transferase (361 aa).

Transmembrane regions (helical) follow at residues 26-46 (SILAALTALFLSLWIGPVLIQ), 73-93 (TMGGSLILMTVTLSVLLWGDL), 98-118 (VWLVLVVMLAFGAIGWYDDWI), 139-159 (IFGLAAGLFLYFTADVPAAVT), 168-188 (IALPLTSISFVAITYFWIVGF), 200-220 (GLAIMPTVLVACALGVFAYAS), 237-257 (AGDLIIICAAIAGAGLGFLWF), 264-284 (VFMGDIGALALGAVLGTIAVI), 289-309 (LVLVVMGGVFVIETLSVIIQV), and 339-359 (VIVRFWIISVVLVLVGLATLK).

The protein belongs to the glycosyltransferase 4 family. MraY subfamily. The cofactor is Mg(2+).

It localises to the cell inner membrane. It catalyses the reaction UDP-N-acetyl-alpha-D-muramoyl-L-alanyl-gamma-D-glutamyl-meso-2,6-diaminopimeloyl-D-alanyl-D-alanine + di-trans,octa-cis-undecaprenyl phosphate = di-trans,octa-cis-undecaprenyl diphospho-N-acetyl-alpha-D-muramoyl-L-alanyl-D-glutamyl-meso-2,6-diaminopimeloyl-D-alanyl-D-alanine + UMP. It functions in the pathway cell wall biogenesis; peptidoglycan biosynthesis. Its function is as follows. Catalyzes the initial step of the lipid cycle reactions in the biosynthesis of the cell wall peptidoglycan: transfers peptidoglycan precursor phospho-MurNAc-pentapeptide from UDP-MurNAc-pentapeptide onto the lipid carrier undecaprenyl phosphate, yielding undecaprenyl-pyrophosphoryl-MurNAc-pentapeptide, known as lipid I. This is Phospho-N-acetylmuramoyl-pentapeptide-transferase from Xylella fastidiosa (strain 9a5c).